The primary structure comprises 252 residues: Glucosamine-6-phosphate deaminase (252 aa).

Aspartate 67 functions as the Proton acceptor; for enolization step in the catalytic mechanism. Catalysis depends on asparagine 137, which acts as the For ring-opening step. Histidine 139 acts as the Proton acceptor; for ring-opening step in catalysis. Glutamate 144 functions as the For ring-opening step in the catalytic mechanism.

This sequence belongs to the glucosamine/galactosamine-6-phosphate isomerase family. NagB subfamily.

It carries out the reaction alpha-D-glucosamine 6-phosphate + H2O = beta-D-fructose 6-phosphate + NH4(+). The protein operates within amino-sugar metabolism; N-acetylneuraminate degradation; D-fructose 6-phosphate from N-acetylneuraminate: step 5/5. Functionally, catalyzes the reversible isomerization-deamination of glucosamine 6-phosphate (GlcN6P) to form fructose 6-phosphate (Fru6P) and ammonium ion. The sequence is that of Glucosamine-6-phosphate deaminase from Staphylococcus aureus (strain bovine RF122 / ET3-1).